A 493-amino-acid chain; its full sequence is Sorting nexin-4 (493 aa).

Positions 1 to 77 (MAVIDQDNFS…ILDCTVSDPH (77 aa)) are disordered. Residues 7 to 28 (DNFSNISWHSEQNAESAASTAQ) show a composition bias toward polar residues. The span at 56–65 (MEHDELDHSG) shows a compositional bias: basic and acidic residues. Positions 68–190 (ILDCTVSDPH…AFLESPDWNA (123 aa)) constitute a PX domain. Residues R111, T113, K137, and R156 each coordinate a 1,2-diacyl-sn-glycero-3-phospho-(1D-myo-inositol-3-phosphate). Coiled-coil stretches lie at residues 248–292 (EIKE…QKLI), 338–363 (SGTL…EYLN), and 405–442 (EQAR…QVSR).

It belongs to the sorting nexin family.

Its subcellular location is the cytoplasm. The protein resides in the membrane. It localises to the endosome membrane. Sorting nexin, involved in the separation or division of vacuoles throughout the entire life cycle of the cells. Involved in retrieval of late-Golgi SNAREs from post-Golgi endosomes to the trans-Golgi network, for cytoplasm to vacuole transport (Cvt), and autophagy of large cargos including mitophagy, pexophagy and glycophagy. This Neurospora crassa (strain ATCC 24698 / 74-OR23-1A / CBS 708.71 / DSM 1257 / FGSC 987) protein is Sorting nexin-4 (vsp-5).